The primary structure comprises 398 residues: MDSSAGPGNISDCSDPLAPASCSPAPGSWLNLSHVDGNQSDPCGPNRTGLGGSHSLCPQTGSPSMVTAITIMALYSIVCVVGLFGNFLVMYVIVRYTKMKTATNIYIFNLALADALATSTLPFQSVNYLMGTWPFGNILCKIVISIDYYNMFTSIFTLCTMSVDRYIAVCHPVKALDFRTPRNAKIVNVCNWILSSAIGLPVMFMATTKYRQGSIDCTLTFSHPTWYWENLLKICVFIFAFIMPVLIITVCYGLMILRLKSVRMLSGSKEKDRNLRRITRMVLVVVAVFIVCWTPIHIYVIIKALITIPETTFQTVSWHFCIALGYTNSCLNPVLYAFLDENFKRCFREFCIPTSSTIEQQNSARIRQNTREHPSTANTVDRTNHQLENLEAETAPLP.

At 1–66 (MDSSAGPGNI…CPQTGSPSMV (66 aa)) the chain is on the extracellular side. N-linked (GlcNAc...) asparagine glycans are attached at residues Asn-9, Asn-31, Asn-38, and Asn-46. A helical membrane pass occupies residues 67–91 (TAITIMALYSIVCVVGLFGNFLVMY). Residues 92–104 (VIVRYTKMKTATN) are Cytoplasmic-facing. A helical transmembrane segment spans residues 105–129 (IYIFNLALADALATSTLPFQSVNYL). The Extracellular segment spans residues 130–140 (MGTWPFGNILC). A disulfide bridge links Cys-140 with Cys-217. Residues 141–163 (KIVISIDYYNMFTSIFTLCTMSV) traverse the membrane as a helical segment. The Cytoplasmic segment spans residues 164–183 (DRYIAVCHPVKALDFRTPRN). Phosphotyrosine is present on Tyr-166. The helical transmembrane segment at 184–205 (AKIVNVCNWILSSAIGLPVMFM) threads the bilayer. At 206-228 (ATTKYRQGSIDCTLTFSHPTWYW) the chain is on the extracellular side. A helical membrane pass occupies residues 229–253 (ENLLKICVFIFAFIMPVLIITVCYG). The Cytoplasmic portion of the chain corresponds to 254-277 (LMILRLKSVRMLSGSKEKDRNLRR). A helical transmembrane segment spans residues 278 to 304 (ITRMVLVVVAVFIVCWTPIHIYVIIKA). Over 305–312 (LITIPETT) the chain is Extracellular. A helical transmembrane segment spans residues 313–336 (FQTVSWHFCIALGYTNSCLNPVLY). The NPxxY; plays a role in stabilizing the activated conformation of the receptor signature appears at 332–336 (NPVLY). Residues 337–398 (AFLDENFKRC…NLEAETAPLP (62 aa)) lie on the Cytoplasmic side of the membrane. Cys-351 carries S-palmitoyl cysteine lipidation. Residues 362–383 (NSARIRQNTREHPSTANTVDRT) form a disordered region. A Phosphoserine modification is found at Ser-363. A Phosphothreonine modification is found at Thr-370. A Phosphoserine modification is found at Ser-375. A Phosphothreonine modification is found at Thr-394.

The protein belongs to the G-protein coupled receptor 1 family. Forms homooligomers and heterooligomers with other GPCRs, such as OPRD1, OPRK1, OPRL1, NPFFR2, ADRA2A, SSTR2, CNR1 and CCR5 (probably in dimeric forms). Interacts with heterotrimeric G proteins; interaction with a heterotrimeric complex containing GNAI1, GNB1 and GNG2 stabilizes the active conformation of the receptor and increases its affinity for endomorphin-2, the synthetic opioid peptide DAMGO and for morphinan agonists. Interacts with PPL; the interaction disrupts agonist-mediated G-protein activation. Interacts (via C-terminus) with DNAJB4 (via C-terminus). Interacts with calmodulin; the interaction inhibits the constitutive activity of OPRM1; it abolishes basal and attenuates agonist-stimulated G-protein coupling. Interacts with FLNA, PLD2, RANBP9 and WLS and GPM6A. Interacts with RTP4. Interacts with SYP and GNAS. Interacts with RGS9, RGS17, RGS20, RGS4, PPP1R9B and HINT1. Isoform 9 interacts with GRPR. In terms of processing, phosphorylated. Differentially phosphorylated in basal and agonist-induced conditions. Agonist-mediated phosphorylation modulates receptor internalization. Phosphorylated by GRK2 in a agonist-dependent manner. Phosphorylation at Tyr-166 requires receptor activation, is dependent on non-receptor protein tyrosine kinase Src and results in a decrease in agonist efficacy by reducing G-protein coupling efficiency. Phosphorylated on tyrosine residues; the phosphorylation is involved in agonist-induced G-protein-independent receptor down-regulation. Phosphorylation at Ser-375 is involved in G-protein-dependent but not beta-arrestin-dependent activation of the ERK pathway. Post-translationally, ubiquitinated. A basal ubiquitination seems not to be related to degradation. Ubiquitination is increased upon formation of OPRM1:OPRD1 oligomers leading to proteasomal degradation; the ubiquitination is diminished by RTP4.

Its subcellular location is the cell membrane. It localises to the cell projection. The protein localises to the axon. It is found in the perikaryon. The protein resides in the dendrite. Its subcellular location is the endosome. Functionally, receptor for endogenous opioids such as beta-endorphin and endomorphin. Receptor for natural and synthetic opioids including morphine, heroin, DAMGO, fentanyl, etorphine, buprenorphin and methadone. Also activated by enkephalin peptides, such as Met-enkephalin or Met-enkephalin-Arg-Phe, with higher affinity for Met-enkephalin-Arg-Phe. Agonist binding to the receptor induces coupling to an inactive GDP-bound heterotrimeric G-protein complex and subsequent exchange of GDP for GTP in the G-protein alpha subunit leading to dissociation of the G-protein complex with the free GTP-bound G-protein alpha and the G-protein beta-gamma dimer activating downstream cellular effectors. The agonist- and cell type-specific activity is predominantly coupled to pertussis toxin-sensitive G(i) and G(o) G alpha proteins, GNAI1, GNAI2, GNAI3 and GNAO1 isoforms Alpha-1 and Alpha-2, and to a lesser extent to pertussis toxin-insensitive G alpha proteins GNAZ and GNA15. They mediate an array of downstream cellular responses, including inhibition of adenylate cyclase activity and both N-type and L-type calcium channels, activation of inward rectifying potassium channels, mitogen-activated protein kinase (MAPK), phospholipase C (PLC), phosphoinositide/protein kinase (PKC), phosphoinositide 3-kinase (PI3K) and regulation of NF-kappa-B. Also couples to adenylate cyclase stimulatory G alpha proteins. The selective temporal coupling to G-proteins and subsequent signaling can be regulated by RGSZ proteins, such as RGS9, RGS17 and RGS4. Phosphorylation by members of the GPRK subfamily of Ser/Thr protein kinases and association with beta-arrestins is involved in short-term receptor desensitization. Beta-arrestins associate with the GPRK-phosphorylated receptor and uncouple it from the G-protein thus terminating signal transduction. The phosphorylated receptor is internalized through endocytosis via clathrin-coated pits which involves beta-arrestins. The activation of the ERK pathway occurs either in a G-protein-dependent or a beta-arrestin-dependent manner and is regulated by agonist-specific receptor phosphorylation. Acts as a class A G-protein coupled receptor (GPCR) which dissociates from beta-arrestin at or near the plasma membrane and undergoes rapid recycling. Receptor down-regulation pathways are varying with the agonist and occur dependent or independent of G-protein coupling. Endogenous ligands induce rapid desensitization, endocytosis and recycling. Heterooligomerization with other GPCRs can modulate agonist binding, signaling and trafficking properties. Its function is as follows. Isoform 9 is involved in morphine-induced scratching and seems to cross-activate GRPR in response to morphine. This chain is Mu-type opioid receptor (Oprm1), found in Mus musculus (Mouse).